Here is a 149-residue protein sequence, read N- to C-terminus: Nucleoside diphosphate kinase 1 (149 aa).

6 residues coordinate ATP: Lys-9, Phe-57, Arg-85, Thr-91, Arg-102, and Asn-112. His-115 (pros-phosphohistidine intermediate) is an active-site residue.

Belongs to the NDK family. In terms of assembly, homohexamer. It depends on Mg(2+) as a cofactor.

It catalyses the reaction a 2'-deoxyribonucleoside 5'-diphosphate + ATP = a 2'-deoxyribonucleoside 5'-triphosphate + ADP. The enzyme catalyses a ribonucleoside 5'-diphosphate + ATP = a ribonucleoside 5'-triphosphate + ADP. Functionally, major role in the synthesis of nucleoside triphosphates other than ATP. The ATP gamma phosphate is transferred to the NDP beta phosphate via a ping-pong mechanism, using a phosphorylated active-site intermediate. This NDK is microtubule-associated. The sequence is that of Nucleoside diphosphate kinase 1 (NDKR) from Oryza sativa subsp. japonica (Rice).